Reading from the N-terminus, the 478-residue chain is Cytochrome c-552 (478 aa).

Residues 1-26 (MTRIKINARRIFSLLIPFFFFTSVHA) form the signal peptide. Heme c is bound at residue histidine 94. Heme-binding residues include cysteine 122, cysteine 125, and lysine 126. The heme c site is built by cysteine 160, cysteine 163, histidine 164, cysteine 209, cysteine 212, and histidine 213. Ca(2+) is bound by residues glutamate 215, tyrosine 216, lysine 261, and glutamine 263. A substrate-binding site is contributed by tyrosine 216. Histidine 264 contributes to the substrate binding site. Heme c contacts are provided by histidine 275, cysteine 282, cysteine 285, histidine 286, histidine 301, cysteine 314, cysteine 317, histidine 318, and histidine 393.

It belongs to the cytochrome c-552 family. The cofactor is Ca(2+). Requires heme c as cofactor.

Its subcellular location is the periplasm. The catalysed reaction is 6 Fe(III)-[cytochrome c] + NH4(+) + 2 H2O = 6 Fe(II)-[cytochrome c] + nitrite + 8 H(+). It participates in nitrogen metabolism; nitrate reduction (assimilation). Functionally, catalyzes the reduction of nitrite to ammonia, consuming six electrons in the process. The protein is Cytochrome c-552 of Escherichia coli O157:H7 (strain EC4115 / EHEC).